The primary structure comprises 131 residues: Large-conductance mechanosensitive channel (131 aa).

2 helical membrane-spanning segments follow: residues 14 to 34 (VMDM…VTSL) and 71 to 91 (GNFI…FLLV).

This sequence belongs to the MscL family. As to quaternary structure, homopentamer.

Its subcellular location is the cell inner membrane. Functionally, channel that opens in response to stretch forces in the membrane lipid bilayer. May participate in the regulation of osmotic pressure changes within the cell. This is Large-conductance mechanosensitive channel from Dinoroseobacter shibae (strain DSM 16493 / NCIMB 14021 / DFL 12).